A 314-amino-acid polypeptide reads, in one-letter code: Ribosomal protein L11 methyltransferase (314 aa).

S-adenosyl-L-methionine-binding residues include Thr-164, Gly-185, Asp-207, and Asn-249.

Belongs to the methyltransferase superfamily. PrmA family.

The protein localises to the cytoplasm. It carries out the reaction L-lysyl-[protein] + 3 S-adenosyl-L-methionine = N(6),N(6),N(6)-trimethyl-L-lysyl-[protein] + 3 S-adenosyl-L-homocysteine + 3 H(+). Methylates ribosomal protein L11. This is Ribosomal protein L11 methyltransferase from Clostridium beijerinckii (strain ATCC 51743 / NCIMB 8052) (Clostridium acetobutylicum).